A 130-amino-acid polypeptide reads, in one-letter code: Calcitonin gene-related peptide 2 (130 aa).

An N-terminal signal peptide occupies residues 1–26 (MDFWKFFPFLALSTIWVLCLASSLQA). A propeptide spanning residues 27–82 (APFRSALESSLDLGTLGDQEKHLLLAALMQDYEQMKARKLEQEEQETKGSRVTAQK) is cleaved from the precursor. An intrachain disulfide couples Cys85 to Cys90. Phenylalanine amide is present on Phe120. Positions 127-130 (DLQA) are excised as a propeptide.

The protein belongs to the calcitonin family. Detected in nerve cells of cerebrum, hippocampus and pons/midbrain in newborns, and only in nerve cells of pons/midbrain in adult.

Its subcellular location is the secreted. In terms of biological role, CALCB/CGRP2 is a peptide hormone that induces vasodilation mediated by the CALCRL-RAMP1 receptor complex. Dilates a variety of vessels including the coronary, cerebral and systemic vasculature. Its abundance in the CNS also points toward a neurotransmitter or neuromodulator role. The protein is Calcitonin gene-related peptide 2 of Mus musculus (Mouse).